Consider the following 200-residue polypeptide: Pyridoxal 5'-phosphate synthase subunit PdxT (200 aa).

52–54 (GES) is a binding site for L-glutamine. Residue Cys84 is the Nucleophile of the active site. L-glutamine contacts are provided by residues Arg116 and 145-146 (IR). Catalysis depends on charge relay system residues His181 and Glu183.

The protein belongs to the glutaminase PdxT/SNO family. In the presence of PdxS, forms a dodecamer of heterodimers. Only shows activity in the heterodimer.

The enzyme catalyses aldehydo-D-ribose 5-phosphate + D-glyceraldehyde 3-phosphate + L-glutamine = pyridoxal 5'-phosphate + L-glutamate + phosphate + 3 H2O + H(+). It catalyses the reaction L-glutamine + H2O = L-glutamate + NH4(+). The protein operates within cofactor biosynthesis; pyridoxal 5'-phosphate biosynthesis. In terms of biological role, catalyzes the hydrolysis of glutamine to glutamate and ammonia as part of the biosynthesis of pyridoxal 5'-phosphate. The resulting ammonia molecule is channeled to the active site of PdxS. This Sulfolobus acidocaldarius (strain ATCC 33909 / DSM 639 / JCM 8929 / NBRC 15157 / NCIMB 11770) protein is Pyridoxal 5'-phosphate synthase subunit PdxT.